Consider the following 294-residue polypeptide: Probable 2-(5''-triphosphoribosyl)-3'-dephosphocoenzyme-A synthase (294 aa).

It belongs to the CitG/MdcB family.

The catalysed reaction is 3'-dephospho-CoA + ATP = 2'-(5''-triphospho-alpha-D-ribosyl)-3'-dephospho-CoA + adenine. The protein is Probable 2-(5''-triphosphoribosyl)-3'-dephosphocoenzyme-A synthase of Streptococcus equi subsp. zooepidemicus (strain H70).